A 266-amino-acid chain; its full sequence is MGILVILVDLQCCRCDAKIRKVLGCLEEEYCIEKVEYDVKNNRVIVRGKFDPEKLCKKIWCKAGKIIKEILIVDVWPPPLPQPPPPCKPPPCEKPPEDCKPKPCHCCSCEKPKPKPKPCHCEKPKPCHCEKPKPCEKPPPCKPEEPPKPPPEKPPPKPECKLVPYPYPVPYPYAGQWCCPKPEPPKPPPEPPKEPEPPKPCGCSHAFVCVCKPAPPPPPPCGCSGGHGNCGCGIRPWPPQVWPPPPVCPPPPWCYTEDNANACSIM.

One can recognise an HMA domain in the interval 1–68 (MGILVILVDL…IWCKAGKIIK (68 aa)). Residues Cys-12 and Cys-15 each coordinate a metal cation. Residues 129-156 (CEKPKPCEKPPPCKPEEPPKPPPEKPPP) form a disordered region. The segment covering 142–156 (KPEEPPKPPPEKPPP) has biased composition (basic and acidic residues).

In terms of biological role, involved in defense responses. Contributes to slowing defense responses toward Magnaporthe oryzae. The chain is Protein PYRICULARIA ORYZAE RESISTANCE 21 from Oryza sativa subsp. japonica (Rice).